The chain runs to 81 residues: Small ribosomal subunit protein bS18 (81 aa).

This sequence belongs to the bacterial ribosomal protein bS18 family. Part of the 30S ribosomal subunit. Forms a tight heterodimer with protein bS6.

Its function is as follows. Binds as a heterodimer with protein bS6 to the central domain of the 16S rRNA, where it helps stabilize the platform of the 30S subunit. The polypeptide is Small ribosomal subunit protein bS18 (Leptospira borgpetersenii serovar Hardjo-bovis (strain JB197)).